A 528-amino-acid polypeptide reads, in one-letter code: Probable methylmalonate-semialdehyde/malonate-semialdehyde dehydrogenase [acylating], mitochondrial (528 aa).

The N-terminal 26 residues, 1-26, are a transit peptide targeting the mitochondrion; sequence MLSFKFAKSASKVIGNRNFHSSSASL. 4 residues coordinate NAD(+): Phe175, Lys199, Glu202, and Arg203. The active-site Nucleophile is the Cys307. Glu408 contributes to the NAD(+) binding site.

Belongs to the aldehyde dehydrogenase family. In terms of assembly, homotetramer.

It localises to the mitochondrion. It catalyses the reaction 2-methyl-3-oxopropanoate + NAD(+) + CoA + H2O = propanoyl-CoA + hydrogencarbonate + NADH + H(+). The enzyme catalyses 3-oxopropanoate + NAD(+) + CoA + H2O = hydrogencarbonate + acetyl-CoA + NADH + H(+). Probable malonate and methylmalonate semialdehyde dehydrogenase involved in the catabolism of valine, thymine, and compounds catabolized by way of beta-alanine, including uracil and cytidine. This Dictyostelium discoideum (Social amoeba) protein is Probable methylmalonate-semialdehyde/malonate-semialdehyde dehydrogenase [acylating], mitochondrial (mmsdh).